The following is a 317-amino-acid chain: Multivesicular body subunit 12B (317 aa).

Residues 1 to 49 are disordered; the sequence is MRSCFCVRRSRDPPPPQPPPPQRGTDQATMPEVKELSEALPETPMDPIT. Pro residues predominate over residues 13 to 22; it reads PPPPQPPPPQ. Residues 45–191 form the MABP domain; that stretch reads MDPITGVGVV…SMGIWYRMGR (147 aa). Residue Ser99 is modified to Phosphoserine. A phosphothreonine mark is found at Thr120, Thr202, and Thr203. A disordered region spans residues 193–218; the sequence is PRNHDSSQPTTPSQSSASSTPAPNLP. Low complexity predominate over residues 198-214; the sequence is SSQPTTPSQSSASSTPA. A Phosphoserine modification is found at Ser222. Residues 252-301 form the UMA domain; it reads MDGVPFMISEKFSCIPESMQPFDLLGITIKSLAEIEKEYEYSFRTEQSAA. Residues 297 to 317 are disordered; sequence EQSAAARLPPSPTRCQQIPQS. Ser307 carries the post-translational modification Phosphoserine.

This sequence belongs to the MVB12 family. Component of the ESCRT-I complex (endosomal sorting complex required for transport I) which consists of TSG101, VPS28, a VPS37 protein (VPS37A to -D) and MVB12A or MVB12B in a 1:1:1:1 stoichiometry. Interacts with TSG101; the association appears to be mediated by the TSG101-VPS37 binary subcomplex. Interacts with VPS28. Interacts with VPS37B; the association appears to be mediated by the TSG101-VPS37 binary subcomplex. Interacts with VPS37C; the association appears to be mediated by the TSG101-VPS37 binary subcomplex.

The protein localises to the endosome. It localises to the late endosome membrane. Its function is as follows. Component of the ESCRT-I complex, a regulator of vesicular trafficking process. Required for the sorting of endocytic ubiquitinated cargos into multivesicular bodies. In Mus musculus (Mouse), this protein is Multivesicular body subunit 12B (Mvb12b).